A 443-amino-acid polypeptide reads, in one-letter code: UPF0597 protein DVU_0440 (443 aa).

It belongs to the UPF0597 family.

This chain is UPF0597 protein DVU_0440, found in Nitratidesulfovibrio vulgaris (strain ATCC 29579 / DSM 644 / CCUG 34227 / NCIMB 8303 / VKM B-1760 / Hildenborough) (Desulfovibrio vulgaris).